The primary structure comprises 185 residues: MVDVGSLSKGMYIKYEGEIYRVIDVNKHFRARGSGLIRTKLKNMSTGLVREVNFNSGEKVEEAEITFRKASYIYNDGEKYYFMDNETFEQYGIPVSDIEEEKNYLVENTEVDLIMHDGKPIGIQLPTSVVLEVVETEPGFKGDTVSGGGKPAVLETGLKITVPFFVEKGQKVRVDTRTGEYIERA.

This sequence belongs to the elongation factor P family.

The protein localises to the cytoplasm. It participates in protein biosynthesis; polypeptide chain elongation. In terms of biological role, involved in peptide bond synthesis. Stimulates efficient translation and peptide-bond synthesis on native or reconstituted 70S ribosomes in vitro. Probably functions indirectly by altering the affinity of the ribosome for aminoacyl-tRNA, thus increasing their reactivity as acceptors for peptidyl transferase. The protein is Elongation factor P of Thermosipho africanus (strain TCF52B).